We begin with the raw amino-acid sequence, 305 residues long: uncharacterized protein (305 aa).

Helical transmembrane passes span 4-24, 38-58, 67-87, 95-115, 125-145, 152-172, 183-203, 215-235, 250-270, and 272-292; these read LNIY…FNLA, AWRF…TEGI, AVSY…LFFV, VNGA…ARII, VLGI…GSIE, ISGG…YGVL, LSTT…VSLF, IGVW…GYLW, LFFN…GTPI, and VFQV…SGVI. 2 consecutive EamA domains span residues 15-140 and 164-290; these read IFTG…LVIT and VCWA…TASG.

Belongs to the EamA transporter family.

It is found in the cell membrane. This is an uncharacterized protein from Bacillus subtilis (strain 168).